Reading from the N-terminus, the 429-residue chain is Histidine--tRNA ligase (429 aa).

This sequence belongs to the class-II aminoacyl-tRNA synthetase family. In terms of assembly, homodimer.

The protein localises to the cytoplasm. It catalyses the reaction tRNA(His) + L-histidine + ATP = L-histidyl-tRNA(His) + AMP + diphosphate + H(+). The polypeptide is Histidine--tRNA ligase (Pelodictyon phaeoclathratiforme (strain DSM 5477 / BU-1)).